Here is a 95-residue protein sequence, read N- to C-terminus: Large ribosomal subunit protein bL28 (95 aa).

Belongs to the bacterial ribosomal protein bL28 family.

This chain is Large ribosomal subunit protein bL28, found in Dinoroseobacter shibae (strain DSM 16493 / NCIMB 14021 / DFL 12).